A 445-amino-acid polypeptide reads, in one-letter code: 3-phosphoshikimate 1-carboxyvinyltransferase (445 aa).

The interval 1–25 (MTDSNQPTPLQARKSGALHGTARVP) is disordered. 3-phosphoshikimate is bound by residues Lys-28, Ser-29, and Arg-33. Lys-28 is a binding site for phosphoenolpyruvate. Residues Gly-101 and Arg-129 each coordinate phosphoenolpyruvate. Residues Ser-175, Gln-177, Asp-328, and Lys-355 each coordinate 3-phosphoshikimate. Residue Gln-177 coordinates phosphoenolpyruvate. Residue Asp-328 is the Proton acceptor of the active site. The phosphoenolpyruvate site is built by Arg-359 and Arg-402.

It belongs to the EPSP synthase family. As to quaternary structure, monomer.

The protein resides in the cytoplasm. It carries out the reaction 3-phosphoshikimate + phosphoenolpyruvate = 5-O-(1-carboxyvinyl)-3-phosphoshikimate + phosphate. Its pathway is metabolic intermediate biosynthesis; chorismate biosynthesis; chorismate from D-erythrose 4-phosphate and phosphoenolpyruvate: step 6/7. In terms of biological role, catalyzes the transfer of the enolpyruvyl moiety of phosphoenolpyruvate (PEP) to the 5-hydroxyl of shikimate-3-phosphate (S3P) to produce enolpyruvyl shikimate-3-phosphate and inorganic phosphate. The polypeptide is 3-phosphoshikimate 1-carboxyvinyltransferase (Rhodopseudomonas palustris (strain TIE-1)).